Here is a 215-residue protein sequence, read N- to C-terminus: Serine acetyltransferase (215 aa).

The protein belongs to the transferase hexapeptide repeat family.

Its subcellular location is the cytoplasm. The catalysed reaction is L-serine + acetyl-CoA = O-acetyl-L-serine + CoA. The protein operates within amino-acid biosynthesis; L-cysteine biosynthesis; L-cysteine from L-serine: step 1/2. The protein is Serine acetyltransferase (cysE) of Staphylococcus aureus (strain MRSA252).